We begin with the raw amino-acid sequence, 179 residues long: Inosine/xanthosine triphosphatase (179 aa).

Glutamate 71 serves as a coordination point for Mg(2+). Substrate is bound at residue 71-72; it reads EA.

Belongs to the YjjX NTPase family. Homodimer. Mg(2+) serves as cofactor. Mn(2+) is required as a cofactor.

It catalyses the reaction XTP + H2O = XDP + phosphate + H(+). The enzyme catalyses ITP + H2O = IDP + phosphate + H(+). Functionally, phosphatase that hydrolyzes non-canonical purine nucleotides such as XTP and ITP to their respective diphosphate derivatives. Probably excludes non-canonical purines from DNA/RNA precursor pool, thus preventing their incorporation into DNA/RNA and avoiding chromosomal lesions. The chain is Inosine/xanthosine triphosphatase from Shewanella oneidensis (strain ATCC 700550 / JCM 31522 / CIP 106686 / LMG 19005 / NCIMB 14063 / MR-1).